A 130-amino-acid chain; its full sequence is Small ribosomal subunit protein uS8 (130 aa).

Belongs to the universal ribosomal protein uS8 family.

This chain is Small ribosomal subunit protein uS8 (RPS22), found in Kluyveromyces marxianus (Yeast).